A 109-amino-acid chain; its full sequence is Stress-response A/B barrel domain-containing protein HS1 (109 aa).

Residues 8–102 enclose the Stress-response A/B barrel domain; it reads VKHVLLASFK…SLDKVLVIDY (95 aa). Mg(2+) is bound by residues V36, I39, E40, and M42.

Homodimer. Mg(2+) is required as a cofactor.

Heat stable protein involved in defense against fungal pathogens. Possesses antifungal activity against diverse pathogenic fungi. Possesses antimicrobial activity. Possesses ribonuclease activity. The sequence is that of Stress-response A/B barrel domain-containing protein HS1 from Arabidopsis thaliana (Mouse-ear cress).